A 445-amino-acid chain; its full sequence is Phosphoglucosamine mutase 1 (445 aa).

Catalysis depends on Ser-102, which acts as the Phosphoserine intermediate. Mg(2+) contacts are provided by Ser-102, Asp-241, Asp-243, and Asp-245. A Phosphoserine modification is found at Ser-102.

This sequence belongs to the phosphohexose mutase family. Requires Mg(2+) as cofactor. In terms of processing, activated by phosphorylation.

It catalyses the reaction alpha-D-glucosamine 1-phosphate = D-glucosamine 6-phosphate. In terms of biological role, catalyzes the conversion of glucosamine-6-phosphate to glucosamine-1-phosphate. This chain is Phosphoglucosamine mutase 1, found in Shewanella baltica (strain OS185).